The sequence spans 299 residues: NEDD8-activating enzyme E1 catalytic subunit (299 aa).

12–37 (GLGCEILKNLTMLSFVKQVHIVDIDT) serves as a coordination point for ATP. Catalysis depends on Cys-168, which acts as the Glycyl thioester intermediate.

The protein belongs to the ubiquitin-activating E1 family. UBA3 subfamily. In terms of assembly, heterodimer of UBA3 and ULA1. Interacts with NEDD8 and UBC12.

It catalyses the reaction ATP + [NEDD8 protein] + [E1 NEDD8-activating enzyme]-L-cysteine = AMP + diphosphate + [E1 NEDD8-activating enzyme]-S-[NEDD8 protein]-yl-L-cysteine.. It participates in protein modification; protein neddylation. In terms of biological role, catalytic subunit of the dimeric UBA3-ULA1 E1 enzyme. E1 activates NEDD8/RUB1 by first adenylating its C-terminal glycine residue with ATP, thereafter linking this residue to the side chain of the catalytic cysteine, yielding a NEDD8-UBA3 thioester and free AMP. E1 finally transfers NEDD8 to the catalytic cysteine of UBC12. This chain is NEDD8-activating enzyme E1 catalytic subunit (UBA3), found in Saccharomyces cerevisiae (strain ATCC 204508 / S288c) (Baker's yeast).